The primary structure comprises 974 residues: Glycine dehydrogenase (decarboxylating) (974 aa).

Residue Lys720 is modified to N6-(pyridoxal phosphate)lysine.

This sequence belongs to the GcvP family. As to quaternary structure, the glycine cleavage system is composed of four proteins: P, T, L and H. It depends on pyridoxal 5'-phosphate as a cofactor.

It catalyses the reaction N(6)-[(R)-lipoyl]-L-lysyl-[glycine-cleavage complex H protein] + glycine + H(+) = N(6)-[(R)-S(8)-aminomethyldihydrolipoyl]-L-lysyl-[glycine-cleavage complex H protein] + CO2. The glycine cleavage system catalyzes the degradation of glycine. The P protein binds the alpha-amino group of glycine through its pyridoxal phosphate cofactor; CO(2) is released and the remaining methylamine moiety is then transferred to the lipoamide cofactor of the H protein. This is Glycine dehydrogenase (decarboxylating) from Cupriavidus metallidurans (strain ATCC 43123 / DSM 2839 / NBRC 102507 / CH34) (Ralstonia metallidurans).